Reading from the N-terminus, the 259-residue chain is Proliferating cell nuclear antigen (259 aa).

A DNA-binding region spans residues 61-80 (RCDRNIALGVNLTSLTKVLR). Lys-164 participates in a covalent cross-link: Glycyl lysine isopeptide (Lys-Gly) (interchain with G-Cter in SUMO); alternate. Residue Lys-164 forms a Glycyl lysine isopeptide (Lys-Gly) (interchain with G-Cter in ubiquitin); alternate linkage.

It belongs to the PCNA family. In terms of assembly, homotrimer. In terms of processing, monoubiquitinated on Lys-164 upon DNA damage, and then polyubiquitinated through 'Lys-63'-linkage.

The protein localises to the nucleus. In terms of biological role, this protein is an auxiliary protein of DNA polymerase delta and is involved in the control of eukaryotic DNA replication by increasing the polymerase's processibility during elongation of the leading strand. Involved in DNA repair. The sequence is that of Proliferating cell nuclear antigen from Chaetomium thermophilum (strain DSM 1495 / CBS 144.50 / IMI 039719) (Thermochaetoides thermophila).